Consider the following 1089-residue polypeptide: Platelet-derived growth factor receptor alpha (1089 aa).

A signal peptide spans 1–23 (MGTSHPAFLVLGCLLTGLSLILC). Ig-like C2-type domains follow at residues 24 to 113 (QLSL…NELE), 117 to 201 (IYIY…FQTI), 202 to 306 (PFNV…KKVT), 319 to 410 (PTFS…FELL), and 414 to 517 (PSSI…LKLV). Over 24-528 (QLSLPSILPN…PTLRSELTVA (505 aa)) the chain is Extracellular. Residues Asn-42, Asn-76, Asn-103, and Asn-179 are each glycosylated (N-linked (GlcNAc...) asparagine). A disulfide bridge connects residues Cys-49 and Cys-100. Disulfide bonds link Cys-150/Cys-189 and Cys-235/Cys-290. N-linked (GlcNAc...) asparagine glycosylation is found at Asn-353, Asn-359, Asn-458, and Asn-468. A disulfide bond links Cys-435 and Cys-501. Residues 529 to 549 (AAVLVLLVIVIISLIVLVVIW) traverse the membrane as a helical segment. The Cytoplasmic portion of the chain corresponds to 550 to 1089 (KQKPRYEIRW…SSDLVEDSFL (540 aa)). Tyr-572 and Tyr-574 each carry phosphotyrosine; by autocatalysis. Residues 593-954 (LVLGRVLGSG…HLSEIVENLL (362 aa)) enclose the Protein kinase domain. Residues 599–607 (LGSGAFGKV) and Lys-627 each bind ATP. A phosphotyrosine; by autocatalysis mark is found at Tyr-720, Tyr-731, Tyr-742, Tyr-754, Tyr-762, and Tyr-768. Asp-818 functions as the Proton acceptor in the catalytic mechanism. Residues Tyr-849, Tyr-988, and Tyr-1018 each carry the phosphotyrosine; by autocatalysis modification. Residues 1018-1089 (YIIPLPDIDP…SSDLVEDSFL (72 aa)) form a disordered region. A compositionally biased stretch (polar residues) spans 1041–1059 (SSQTSEESAIETGSSSSTF). Acidic residues predominate over residues 1065 to 1089 (ETIEDIDMMDDIGIDSSDLVEDSFL).

Belongs to the protein kinase superfamily. Tyr protein kinase family. CSF-1/PDGF receptor subfamily. Interacts with homodimeric PDGFA, PDGFB and PDGFC, and with heterodimers formed by PDGFA and PDGFB. Monomer in the absence of bound ligand. Interaction with dimeric PDGFA, PDGFB and/or PDGFC leads to receptor dimerization, where both PDGFRA homodimers and heterodimers with PDGFRB are observed. Interacts (tyrosine phosphorylated) with SHB (via SH2 domain). Interacts (tyrosine phosphorylated) with SHF (via SH2 domain). Interacts (tyrosine phosphorylated) with SRC (via SH2 domain). Interacts (tyrosine phosphorylated) with PIK3R1. Interacts (tyrosine phosphorylated) with PLCG1 (via SH2 domain). Interacts (tyrosine phosphorylated) with CRK, GRB2 and GRB7. Interacts with CD248; this interaction promotes PDGF receptor signaling pathway. As to quaternary structure, (Microbial infection) Interacts with human cytomegalovirus/HHV-5 envelope glycoprotein B/gB. Also interacts with the trimeric complex gH-gL-gO. Trimer-PDGFRA interaction has an inhibitory effect on PDGFRA signaling. In terms of processing, N-glycosylated. Post-translationally, ubiquitinated, leading to its internalization and degradation. Autophosphorylated on tyrosine residues upon ligand binding. Autophosphorylation occurs in trans, i.e. one subunit of the dimeric receptor phosphorylates tyrosine residues on the other subunit. Phosphorylation at Tyr-731 and Tyr-742 is important for interaction with PIK3R1. Phosphorylation at Tyr-720 and Tyr-754 is important for interaction with PTPN11. Phosphorylation at Tyr-762 is important for interaction with CRK. Phosphorylation at Tyr-572 and Tyr-574 is important for interaction with SRC and SRC family members. Phosphorylation at Tyr-988 and Tyr-1018 is important for interaction with PLCG1. In terms of tissue distribution, detected in platelets (at protein level). Widely expressed. Detected in brain, fibroblasts, smooth muscle, heart, and embryo. Expressed in primary and metastatic colon tumors and in normal colon tissue.

The protein resides in the cell membrane. The protein localises to the cell projection. It is found in the cilium. It localises to the golgi apparatus. It catalyses the reaction L-tyrosyl-[protein] + ATP = O-phospho-L-tyrosyl-[protein] + ADP + H(+). With respect to regulation, present in an inactive conformation in the absence of bound ligand. Binding of PDGFA and/or PDGFB leads to dimerization and activation by autophosphorylation on tyrosine residues. Inhibited by imatinib, nilotinib and sorafenib. Tyrosine-protein kinase that acts as a cell-surface receptor for PDGFA, PDGFB and PDGFC and plays an essential role in the regulation of embryonic development, cell proliferation, survival and chemotaxis. Depending on the context, promotes or inhibits cell proliferation and cell migration. Plays an important role in the differentiation of bone marrow-derived mesenchymal stem cells. Required for normal skeleton development and cephalic closure during embryonic development. Required for normal development of the mucosa lining the gastrointestinal tract, and for recruitment of mesenchymal cells and normal development of intestinal villi. Plays a role in cell migration and chemotaxis in wound healing. Plays a role in platelet activation, secretion of agonists from platelet granules, and in thrombin-induced platelet aggregation. Binding of its cognate ligands - homodimeric PDGFA, homodimeric PDGFB, heterodimers formed by PDGFA and PDGFB or homodimeric PDGFC -leads to the activation of several signaling cascades; the response depends on the nature of the bound ligand and is modulated by the formation of heterodimers between PDGFRA and PDGFRB. Phosphorylates PIK3R1, PLCG1, and PTPN11. Activation of PLCG1 leads to the production of the cellular signaling molecules diacylglycerol and inositol 1,4,5-trisphosphate, mobilization of cytosolic Ca(2+) and the activation of protein kinase C. Phosphorylates PIK3R1, the regulatory subunit of phosphatidylinositol 3-kinase, and thereby mediates activation of the AKT1 signaling pathway. Mediates activation of HRAS and of the MAP kinases MAPK1/ERK2 and/or MAPK3/ERK1. Promotes activation of STAT family members STAT1, STAT3 and STAT5A and/or STAT5B. Receptor signaling is down-regulated by protein phosphatases that dephosphorylate the receptor and its down-stream effectors, and by rapid internalization of the activated receptor. The chain is Platelet-derived growth factor receptor alpha (PDGFRA) from Homo sapiens (Human).